Consider the following 492-residue polypeptide: Ethanolamine-phosphate phospho-lyase (492 aa).

An N6-(pyridoxal phosphate)lysine modification is found at Lys280. Residues 462-492 are disordered; sequence ASDENGLVHPSNGNSHKHTSTIPLSKKTKRN.

Belongs to the class-III pyridoxal-phosphate-dependent aminotransferase family. Homotetramer. It depends on pyridoxal 5'-phosphate as a cofactor.

It is found in the mitochondrion. It catalyses the reaction phosphoethanolamine + H2O = acetaldehyde + NH4(+) + phosphate. Catalyzes the pyridoxal-phosphate-dependent breakdown of phosphoethanolamine, converting it to ammonia, inorganic phosphate and acetaldehyde. The protein is Ethanolamine-phosphate phospho-lyase (etnppl) of Danio rerio (Zebrafish).